The chain runs to 156 residues: 6,7-dimethyl-8-ribityllumazine synthase (156 aa).

Residues Phe24, 56–58, and 80–82 each bind 5-amino-6-(D-ribitylamino)uracil; these read SFE and AVV. 85–86 serves as a coordination point for (2S)-2-hydroxy-3-oxobutyl phosphate; the sequence is ET. His88 serves as the catalytic Proton donor. Phe113 lines the 5-amino-6-(D-ribitylamino)uracil pocket. Arg127 lines the (2S)-2-hydroxy-3-oxobutyl phosphate pocket.

Belongs to the DMRL synthase family.

The enzyme catalyses (2S)-2-hydroxy-3-oxobutyl phosphate + 5-amino-6-(D-ribitylamino)uracil = 6,7-dimethyl-8-(1-D-ribityl)lumazine + phosphate + 2 H2O + H(+). It participates in cofactor biosynthesis; riboflavin biosynthesis; riboflavin from 2-hydroxy-3-oxobutyl phosphate and 5-amino-6-(D-ribitylamino)uracil: step 1/2. In terms of biological role, catalyzes the formation of 6,7-dimethyl-8-ribityllumazine by condensation of 5-amino-6-(D-ribitylamino)uracil with 3,4-dihydroxy-2-butanone 4-phosphate. This is the penultimate step in the biosynthesis of riboflavin. In Thermococcus kodakarensis (strain ATCC BAA-918 / JCM 12380 / KOD1) (Pyrococcus kodakaraensis (strain KOD1)), this protein is 6,7-dimethyl-8-ribityllumazine synthase.